A 362-amino-acid polypeptide reads, in one-letter code: 3-dehydroquinate synthase (362 aa).

NAD(+) contacts are provided by residues 74–79, 108–112, 132–133, lysine 145, and lysine 154; these read DGEEHK, GVTGD, and TT. Positions 187, 250, and 267 each coordinate Zn(2+).

This sequence belongs to the sugar phosphate cyclases superfamily. Dehydroquinate synthase family. Requires Co(2+) as cofactor. The cofactor is Zn(2+). NAD(+) is required as a cofactor.

The protein resides in the cytoplasm. The catalysed reaction is 7-phospho-2-dehydro-3-deoxy-D-arabino-heptonate = 3-dehydroquinate + phosphate. Its pathway is metabolic intermediate biosynthesis; chorismate biosynthesis; chorismate from D-erythrose 4-phosphate and phosphoenolpyruvate: step 2/7. In terms of biological role, catalyzes the conversion of 3-deoxy-D-arabino-heptulosonate 7-phosphate (DAHP) to dehydroquinate (DHQ). The chain is 3-dehydroquinate synthase from Syntrophotalea carbinolica (strain DSM 2380 / NBRC 103641 / GraBd1) (Pelobacter carbinolicus).